Consider the following 189-residue polypeptide: Probable UbiX-like flavin prenyltransferase (189 aa).

Residues Gly9–Ser11, Ser36, Ser87–Thr90, and Arg122 contribute to the FMN site.

This sequence belongs to the UbiX/PAD1 family. YclB subfamily. In terms of assembly, homododecamer.

The catalysed reaction is dimethylallyl phosphate + FMNH2 = prenylated FMNH2 + phosphate. In terms of biological role, involved in the non-oxidative decarboxylation and detoxification of phenolic derivatives under anaerobic conditions. Flavin prenyltransferase that catalyzes the synthesis of the prenylated FMN cofactor (prenyl-FMN) for phenolic acid decarboxylase. The protein is Probable UbiX-like flavin prenyltransferase of Sedimentibacter hydroxybenzoicus (Clostridium hydroxybenzoicum).